The primary structure comprises 491 residues: Ran-binding protein 3-like (491 aa).

Residues 270 to 441 enclose the RanBD1 domain; that stretch reads TFKSVLKFPN…VALRSLAKQG (172 aa). A disordered region spans residues 440 to 468; sequence QGDGGPAESQSDTALPQLNGESCDEDEDE. Residues 447–459 are compositionally biased toward polar residues; sequence ESQSDTALPQLNG.

Interacts with SMAD1, SMAD5 and SMAD8.

It localises to the nucleus. It is found in the cytoplasm. In terms of biological role, nuclear export factor for BMP-specific SMAD1/5/8 that plays a critical role in terminating BMP signaling and regulating mesenchymal stem cell differentiation by blocking osteoblast differentiation to promote myogenic differention. Directly recognizes dephosphorylated SMAD1/5/8 and mediates their nuclear export in a Ran-dependent manner. This Mus musculus (Mouse) protein is Ran-binding protein 3-like (Ranbp3l).